A 375-amino-acid chain; its full sequence is Succinyl-diaminopimelate desuccinylase (375 aa).

Residue H75 participates in Zn(2+) binding. The active site involves D77. Residue D106 coordinates Zn(2+). E136 serves as the catalytic Proton acceptor. Positions 137, 165, and 348 each coordinate Zn(2+).

Belongs to the peptidase M20A family. DapE subfamily. In terms of assembly, homodimer. Requires Zn(2+) as cofactor. Co(2+) is required as a cofactor.

It carries out the reaction N-succinyl-(2S,6S)-2,6-diaminopimelate + H2O = (2S,6S)-2,6-diaminopimelate + succinate. The protein operates within amino-acid biosynthesis; L-lysine biosynthesis via DAP pathway; LL-2,6-diaminopimelate from (S)-tetrahydrodipicolinate (succinylase route): step 3/3. Catalyzes the hydrolysis of N-succinyl-L,L-diaminopimelic acid (SDAP), forming succinate and LL-2,6-diaminopimelate (DAP), an intermediate involved in the bacterial biosynthesis of lysine and meso-diaminopimelic acid, an essential component of bacterial cell walls. This is Succinyl-diaminopimelate desuccinylase from Novosphingobium aromaticivorans (strain ATCC 700278 / DSM 12444 / CCUG 56034 / CIP 105152 / NBRC 16084 / F199).